Consider the following 461-residue polypeptide: Bifunctional protein GlmU (461 aa).

Positions 1–232 (MNLQIIILAA…SFEVQGINNR (232 aa)) are pyrophosphorylase. Residues 8 to 11 (LAAG), K22, Q73, and 78 to 79 (GT) each bind UDP-N-acetyl-alpha-D-glucosamine. Residue D102 coordinates Mg(2+). Positions 142, 157, and 230 each coordinate UDP-N-acetyl-alpha-D-glucosamine. N230 lines the Mg(2+) pocket. Residues 233–253 (QQLQQLERIWQQRAANQLMEK) form a linker region. The tract at residues 254 to 461 (GVTLADANRF…WKRPAKRERD (208 aa)) is N-acetyltransferase. UDP-N-acetyl-alpha-D-glucosamine contacts are provided by R336 and K354. The active-site Proton acceptor is H366. UDP-N-acetyl-alpha-D-glucosamine contacts are provided by Y369 and N380. Residues A383, 389 to 390 (NY), S408, and A426 contribute to the acetyl-CoA site.

In the N-terminal section; belongs to the N-acetylglucosamine-1-phosphate uridyltransferase family. It in the C-terminal section; belongs to the transferase hexapeptide repeat family. In terms of assembly, homotrimer. Requires Mg(2+) as cofactor.

Its subcellular location is the cytoplasm. It catalyses the reaction alpha-D-glucosamine 1-phosphate + acetyl-CoA = N-acetyl-alpha-D-glucosamine 1-phosphate + CoA + H(+). The enzyme catalyses N-acetyl-alpha-D-glucosamine 1-phosphate + UTP + H(+) = UDP-N-acetyl-alpha-D-glucosamine + diphosphate. Its pathway is nucleotide-sugar biosynthesis; UDP-N-acetyl-alpha-D-glucosamine biosynthesis; N-acetyl-alpha-D-glucosamine 1-phosphate from alpha-D-glucosamine 6-phosphate (route II): step 2/2. It functions in the pathway nucleotide-sugar biosynthesis; UDP-N-acetyl-alpha-D-glucosamine biosynthesis; UDP-N-acetyl-alpha-D-glucosamine from N-acetyl-alpha-D-glucosamine 1-phosphate: step 1/1. The protein operates within bacterial outer membrane biogenesis; LPS lipid A biosynthesis. Functionally, catalyzes the last two sequential reactions in the de novo biosynthetic pathway for UDP-N-acetylglucosamine (UDP-GlcNAc). The C-terminal domain catalyzes the transfer of acetyl group from acetyl coenzyme A to glucosamine-1-phosphate (GlcN-1-P) to produce N-acetylglucosamine-1-phosphate (GlcNAc-1-P), which is converted into UDP-GlcNAc by the transfer of uridine 5-monophosphate (from uridine 5-triphosphate), a reaction catalyzed by the N-terminal domain. The polypeptide is Bifunctional protein GlmU (Legionella pneumophila (strain Lens)).